Here is a 274-residue protein sequence, read N- to C-terminus: NH(3)-dependent NAD(+) synthetase (274 aa).

46-53 (GISGGQDS) contributes to the ATP binding site. D52 serves as a coordination point for Mg(2+). R140 contributes to the deamido-NAD(+) binding site. T160 lines the ATP pocket. E165 contacts Mg(2+). Residues K173 and D180 each contribute to the deamido-NAD(+) site. The ATP site is built by K189 and T211. Position 260 to 261 (260 to 261 (HK)) interacts with deamido-NAD(+).

It belongs to the NAD synthetase family. Homodimer.

The catalysed reaction is deamido-NAD(+) + NH4(+) + ATP = AMP + diphosphate + NAD(+) + H(+). It participates in cofactor biosynthesis; NAD(+) biosynthesis; NAD(+) from deamido-NAD(+) (ammonia route): step 1/1. Functionally, catalyzes the ATP-dependent amidation of deamido-NAD to form NAD. Uses ammonia as a nitrogen source. The sequence is that of NH(3)-dependent NAD(+) synthetase from Lactococcus lactis subsp. lactis (strain IL1403) (Streptococcus lactis).